Here is a 200-residue protein sequence, read N- to C-terminus: 3-isopropylmalate dehydratase small subunit (200 aa).

The protein belongs to the LeuD family. LeuD type 1 subfamily. As to quaternary structure, heterodimer of LeuC and LeuD.

The catalysed reaction is (2R,3S)-3-isopropylmalate = (2S)-2-isopropylmalate. The protein operates within amino-acid biosynthesis; L-leucine biosynthesis; L-leucine from 3-methyl-2-oxobutanoate: step 2/4. Its function is as follows. Catalyzes the isomerization between 2-isopropylmalate and 3-isopropylmalate, via the formation of 2-isopropylmaleate. The polypeptide is 3-isopropylmalate dehydratase small subunit (Methylobacterium radiotolerans (strain ATCC 27329 / DSM 1819 / JCM 2831 / NBRC 15690 / NCIMB 10815 / 0-1)).